The sequence spans 224 residues: COMM domain-containing protein 5 (224 aa).

S2 bears the N-acetylserine mark. The 65-residue stretch at 151-215 (HIADFRWRVD…LVLKEMADLE (65 aa)) folds into the COMM domain.

The protein belongs to the COMM domain-containing protein 5 family. In terms of assembly, component of the commander complex consisting of the CCC subcomplex and the retriever subcomplex. Component of the CCC (COMMD/CCDC22/CCDC93) subcomplex consisting of COMMD1, COMMD2, COMMD3, COMMD4, COMMD5, COMMD6, COMMD7, COMMD8, COMMD9, COMMD10, CCDC22 and CCDC93; within the complex forms a heterodimer with COMMD10. Interacts (via COMM domain) with COMMD1 (via COMM domain). Interacts with RELA, RELB, NFKB1/p105. Interacts with CCDC22, CCDC93, SCNN1B, CUL2, CUL3, CUL4A, CUL4B, CUL7.

It localises to the nucleus. The protein resides in the cytoplasm. In terms of biological role, scaffold protein in the commander complex that is essential for endosomal recycling of transmembrane cargos; the commander complex is composed of the CCC subcomplex and the retriever subcomplex. May modulate activity of cullin-RING E3 ubiquitin ligase (CRL) complexes. Negatively regulates cell proliferation. Negatively regulates cell cycle G2/M phase transition probably by transactivating p21/CDKN1A through the p53/TP53-independent signaling pathway. Involved in kidney proximal tubule morphogenesis. Down-regulates activation of NF-kappa-B. The chain is COMM domain-containing protein 5 (COMMD5) from Bos taurus (Bovine).